A 220-amino-acid chain; its full sequence is Inner membrane-spanning protein YciB (220 aa).

6 helical membrane-spanning segments follow: residues 20–40 (EVPP…FFFA), 57–77 (IGAP…IALA), 86–106 (LPIM…LTLW), 123–143 (LFGG…GYVF), 156–176 (KLTL…EIVW), and 187–207 (FKVW…MPLI).

Belongs to the YciB family.

The protein resides in the cell inner membrane. Plays a role in cell envelope biogenesis, maintenance of cell envelope integrity and membrane homeostasis. The chain is Inner membrane-spanning protein YciB from Brucella melitensis biotype 2 (strain ATCC 23457).